The following is a 103-amino-acid chain: Ig lambda chain C region (103 aa).

Positions 6–99 (PTITLFPPSK…NGTSITKTLK (94 aa)) constitute an Ig-like domain. C28 and C85 are disulfide-bonded.

In Gallus gallus (Chicken), this protein is Ig lambda chain C region.